The primary structure comprises 208 residues: Large ribosomal subunit protein bL25 (208 aa).

The protein belongs to the bacterial ribosomal protein bL25 family. CTC subfamily. In terms of assembly, part of the 50S ribosomal subunit; part of the 5S rRNA/L5/L18/L25 subcomplex. Contacts the 5S rRNA. Binds to the 5S rRNA independently of L5 and L18.

This is one of the proteins that binds to the 5S RNA in the ribosome where it forms part of the central protuberance. The chain is Large ribosomal subunit protein bL25 from Bordetella pertussis (strain Tohama I / ATCC BAA-589 / NCTC 13251).